The chain runs to 486 residues: Protein DETOXIFICATION 16 (486 aa).

The next 12 helical transmembrane spans lie at 35–55, 68–88, 117–137, 142–162, 179–199, 207–227, 259–279, 288–308, 331–351, 365–385, 401–421, and 433–453; these read GPLIAVSLLQFCLQVISVMFV, IATSFASVTGFSFLMGTASAL, LASIPLSIIWANTEHLLVFFG, IATLAGSYAKFMIPSIFAYGL, VVFCSGVTTSLHVLLCWVLVF, GAALANSISYWLNVVLLFCYV, ALMVCLEMWSFELLVLLSGLL, VLSICLNTSGTMWMIPFGLSG, RVVICIAVAESIVIGSVLILI, VVSYVASMMPILALGNFLDSL, IGAIINLGSYYLVGVPSGLLL, and WLGIICALVVQVFGLGLVTIF.

This sequence belongs to the multi antimicrobial extrusion (MATE) (TC 2.A.66.1) family.

It localises to the membrane. The polypeptide is Protein DETOXIFICATION 16 (Arabidopsis thaliana (Mouse-ear cress)).